A 211-amino-acid polypeptide reads, in one-letter code: Redox-sensing transcriptional repressor Rex (211 aa).

Positions 18 to 57 form a DNA-binding region, H-T-H motif; it reads LYYRFLENLHASGKQRVSSSELSEAVKVDSATIRRDFSYF. Residue 92–97 coordinates NAD(+); the sequence is GVGNLG.

It belongs to the transcriptional regulatory Rex family. Homodimer.

It localises to the cytoplasm. Its function is as follows. Modulates transcription in response to changes in cellular NADH/NAD(+) redox state. The chain is Redox-sensing transcriptional repressor Rex from Halalkalibacterium halodurans (strain ATCC BAA-125 / DSM 18197 / FERM 7344 / JCM 9153 / C-125) (Bacillus halodurans).